Consider the following 113-residue polypeptide: Integration host factor subunit alpha (113 aa).

Positions 59–80 (GNFQVRDKPPRPGRNPKTGETI) are disordered.

The protein belongs to the bacterial histone-like protein family. Heterodimer of an alpha and a beta chain.

This protein is one of the two subunits of integration host factor, a specific DNA-binding protein that functions in genetic recombination as well as in transcriptional and translational control. The polypeptide is Integration host factor subunit alpha (Bordetella bronchiseptica (strain ATCC BAA-588 / NCTC 13252 / RB50) (Alcaligenes bronchisepticus)).